A 205-amino-acid chain; its full sequence is Cerebellin-3 (205 aa).

Residues 1–32 form the signal peptide; it reads MLGTKRHWPPGPSLSLELPLALTLLALRAGWA. A C1q domain is found at 67 to 205; that stretch reads APPGRVAFAA…SFSGFLIFPL (139 aa). Asn90 carries N-linked (GlcNAc...) asparagine glycosylation.

Heterohexamer; disulfide-linked heterotrimers. Interacts with CBLN1. May also form oligomers with CBLN2 and CBLN4.

It is found in the endoplasmic reticulum. The protein resides in the golgi apparatus. The protein localises to the cis-Golgi network. It localises to the secreted. Its subcellular location is the synapse. Functionally, may be involved in synaptic functions in the CNS. In Bos taurus (Bovine), this protein is Cerebellin-3 (CBLN3).